Consider the following 270-residue polypeptide: Elongation factor Ts (270 aa).

The tract at residues 77–80 (TDFV) is involved in Mg(2+) ion dislocation from EF-Tu.

The protein belongs to the EF-Ts family.

It is found in the cytoplasm. Functionally, associates with the EF-Tu.GDP complex and induces the exchange of GDP to GTP. It remains bound to the aminoacyl-tRNA.EF-Tu.GTP complex up to the GTP hydrolysis stage on the ribosome. This is Elongation factor Ts from Nocardioides sp. (strain ATCC BAA-499 / JS614).